A 275-amino-acid polypeptide reads, in one-letter code: Adenosylcobinamide-GDP ribazoletransferase (275 aa).

The next 6 membrane-spanning stretches (helical) occupy residues 52–72 (VVGV…GVLG), 73–93 (VTPL…NRMM), 126–146 (MGFS…AALV), 181–201 (FGAM…LVAL), 208–228 (VAVW…GIIA), and 251–271 (IGAG…VAVA).

Belongs to the CobS family. Mg(2+) serves as cofactor.

The protein resides in the cell membrane. The catalysed reaction is alpha-ribazole + adenosylcob(III)inamide-GDP = adenosylcob(III)alamin + GMP + H(+). The enzyme catalyses alpha-ribazole 5'-phosphate + adenosylcob(III)inamide-GDP = adenosylcob(III)alamin 5'-phosphate + GMP + H(+). It functions in the pathway cofactor biosynthesis; adenosylcobalamin biosynthesis; adenosylcobalamin from cob(II)yrinate a,c-diamide: step 7/7. Its function is as follows. Joins adenosylcobinamide-GDP and alpha-ribazole to generate adenosylcobalamin (Ado-cobalamin). Also synthesizes adenosylcobalamin 5'-phosphate from adenosylcobinamide-GDP and alpha-ribazole 5'-phosphate. The polypeptide is Adenosylcobinamide-GDP ribazoletransferase (Corynebacterium efficiens (strain DSM 44549 / YS-314 / AJ 12310 / JCM 11189 / NBRC 100395)).